We begin with the raw amino-acid sequence, 1373 residues long: DNA-directed RNA polymerase subunit beta (1373 aa).

The protein belongs to the RNA polymerase beta chain family. As to quaternary structure, the RNAP catalytic core consists of 2 alpha, 1 beta, 1 beta' and 1 omega subunit. When a sigma factor is associated with the core the holoenzyme is formed, which can initiate transcription.

It carries out the reaction RNA(n) + a ribonucleoside 5'-triphosphate = RNA(n+1) + diphosphate. Functionally, DNA-dependent RNA polymerase catalyzes the transcription of DNA into RNA using the four ribonucleoside triphosphates as substrates. The protein is DNA-directed RNA polymerase subunit beta of Rickettsia massiliae.